A 614-amino-acid chain; its full sequence is Translation initiation factor IF-2 (614 aa).

The tr-type G domain maps to 115 to 283 (ARAPIVTIMG…ILLIAELNDY (169 aa)). The segment at 124–131 (GHVDHGKT) is G1. GTP is bound at residue 124 to 131 (GHVDHGKT). The tract at residues 149–153 (GITQH) is G2. Positions 170–173 (DTPG) are G3. Residues 170 to 174 (DTPGH) and 224 to 227 (NKMD) each bind GTP. The tract at residues 224–227 (NKMD) is G4. Residues 260–262 (SAL) are G5.

It belongs to the TRAFAC class translation factor GTPase superfamily. Classic translation factor GTPase family. IF-2 subfamily.

It is found in the cytoplasm. Its function is as follows. One of the essential components for the initiation of protein synthesis. Protects formylmethionyl-tRNA from spontaneous hydrolysis and promotes its binding to the 30S ribosomal subunits. Also involved in the hydrolysis of GTP during the formation of the 70S ribosomal complex. The protein is Translation initiation factor IF-2 of Ureaplasma urealyticum serovar 10 (strain ATCC 33699 / Western).